The primary structure comprises 126 residues: MVSETTKTISVSNLIEEFENEQLKKELPEIYVGDTVKVGVRITEGNKERVQPYEGVVIAKRHGGIHQTITVRRIFQGIGVERVFMLHSPQVASLKVERRGKVRRAKLFYLRDRVGKATRVKQRFDR.

It belongs to the bacterial ribosomal protein bL19 family.

In terms of biological role, this protein is located at the 30S-50S ribosomal subunit interface and may play a role in the structure and function of the aminoacyl-tRNA binding site. The chain is Large ribosomal subunit protein bL19 from Prochlorococcus marinus (strain MIT 9312).